We begin with the raw amino-acid sequence, 261 residues long: UPF0246 protein azo1887 (261 aa).

Belongs to the UPF0246 family.

The sequence is that of UPF0246 protein azo1887 from Azoarcus sp. (strain BH72).